The primary structure comprises 134 residues: Small ribosomal subunit protein uS8 (134 aa).

Belongs to the universal ribosomal protein uS8 family. In terms of assembly, part of the 30S ribosomal subunit. Contacts proteins S5 and S12.

One of the primary rRNA binding proteins, it binds directly to 16S rRNA central domain where it helps coordinate assembly of the platform of the 30S subunit. The polypeptide is Small ribosomal subunit protein uS8 (Kosmotoga olearia (strain ATCC BAA-1733 / DSM 21960 / TBF 19.5.1)).